Consider the following 353-residue polypeptide: Photosystem II protein D1 (353 aa).

Thr2 bears the N-acetylthreonine mark. Thr2 bears the Phosphothreonine mark. 3 helical membrane-spanning segments follow: residues 29–46 (YIGWFGVLMIPTLLTATS), 118–133 (HFLLGVRCYMGREWEL), and 142–156 (WIAVAYSAPVAAATA). His118 contacts chlorophyll a. Tyr126 contributes to the pheophytin a binding site. Residues Asp170 and Glu189 each contribute to the [CaMn4O5] cluster site. The chain crosses the membrane as a helical span at residues 197–218 (FHMLGVAGVFGGSLFSAMHGSL). Position 198 (His198) interacts with chlorophyll a. Residues His215 and 264–265 (SF) contribute to the a quinone site. His215 is a Fe cation binding site. His272 contacts Fe cation. Residues 274-288 (FLAAWPVIGIWFTSL) form a helical membrane-spanning segment. [CaMn4O5] cluster is bound by residues His332, Glu333, Asp342, and Ala344. Residues 345–353 (AVEAPSTIG) constitute a propeptide that is removed on maturation.

This sequence belongs to the reaction center PufL/M/PsbA/D family. As to quaternary structure, PSII is composed of 1 copy each of membrane proteins PsbA, PsbB, PsbC, PsbD, PsbE, PsbF, PsbH, PsbI, PsbJ, PsbK, PsbL, PsbM, PsbT, PsbX, PsbY, PsbZ, Psb30/Ycf12, at least 3 peripheral proteins of the oxygen-evolving complex and a large number of cofactors. It forms dimeric complexes. It depends on The D1/D2 heterodimer binds P680, chlorophylls that are the primary electron donor of PSII, and subsequent electron acceptors. It shares a non-heme iron and each subunit binds pheophytin, quinone, additional chlorophylls, carotenoids and lipids. D1 provides most of the ligands for the Mn4-Ca-O5 cluster of the oxygen-evolving complex (OEC). There is also a Cl(-1) ion associated with D1 and D2, which is required for oxygen evolution. The PSII complex binds additional chlorophylls, carotenoids and specific lipids. as a cofactor. In terms of processing, tyr-161 forms a radical intermediate that is referred to as redox-active TyrZ, YZ or Y-Z. Post-translationally, C-terminally processed by CTPA; processing is essential to allow assembly of the oxygen-evolving complex and thus photosynthetic growth.

The protein resides in the plastid. It is found in the chloroplast thylakoid membrane. It catalyses the reaction 2 a plastoquinone + 4 hnu + 2 H2O = 2 a plastoquinol + O2. In terms of biological role, photosystem II (PSII) is a light-driven water:plastoquinone oxidoreductase that uses light energy to abstract electrons from H(2)O, generating O(2) and a proton gradient subsequently used for ATP formation. It consists of a core antenna complex that captures photons, and an electron transfer chain that converts photonic excitation into a charge separation. The D1/D2 (PsbA/PsbD) reaction center heterodimer binds P680, the primary electron donor of PSII as well as several subsequent electron acceptors. The protein is Photosystem II protein D1 of Landoltia punctata (Dotted duckmeat).